The following is a 730-amino-acid chain: Elongation factor 2 (730 aa).

Residues 19–260 (QRIRNIGIVA…MVIHFLPNPL (242 aa)) form the tr-type G domain. GTP contacts are provided by residues 28–35 (AHIDHGKT), 94–98 (DTPGH), and 148–151 (NKVD). His-596 carries the post-translational modification Diphthamide.

The protein belongs to the TRAFAC class translation factor GTPase superfamily. Classic translation factor GTPase family. EF-G/EF-2 subfamily.

It localises to the cytoplasm. Catalyzes the GTP-dependent ribosomal translocation step during translation elongation. During this step, the ribosome changes from the pre-translocational (PRE) to the post-translocational (POST) state as the newly formed A-site-bound peptidyl-tRNA and P-site-bound deacylated tRNA move to the P and E sites, respectively. Catalyzes the coordinated movement of the two tRNA molecules, the mRNA and conformational changes in the ribosome. In Methanosarcina mazei (strain ATCC BAA-159 / DSM 3647 / Goe1 / Go1 / JCM 11833 / OCM 88) (Methanosarcina frisia), this protein is Elongation factor 2.